A 626-amino-acid chain; its full sequence is DNA primase (626 aa).

The CHC2-type zinc-finger motif lies at 39–63 (CPFHGEKTPSFSVSPEKQIFHCFGC). Residues 264-346 (EEITLMEGFM…DVFVLQLPAG (83 aa)) form the Toprim domain. Mg(2+)-binding residues include E270, D314, and D316.

It belongs to the DnaG primase family. Monomer. Interacts with DnaB. Zn(2+) serves as cofactor. Requires Mg(2+) as cofactor.

It carries out the reaction ssDNA + n NTP = ssDNA/pppN(pN)n-1 hybrid + (n-1) diphosphate.. Its function is as follows. RNA polymerase that catalyzes the synthesis of short RNA molecules used as primers for DNA polymerase during DNA replication. This is DNA primase from Listeria monocytogenes serovar 1/2a (strain ATCC BAA-679 / EGD-e).